The chain runs to 639 residues: Coiled-coil domain-containing protein 93 homolog (639 aa).

Residues K250–K275 are disordered. A compositionally biased stretch (basic and acidic residues) spans G260–K275. Residues A332–R492 are a coiled coil.

The protein belongs to the CCDC93 family.

The chain is Coiled-coil domain-containing protein 93 homolog from Dictyostelium discoideum (Social amoeba).